We begin with the raw amino-acid sequence, 72 residues long: Translation initiation factor IF-1 (72 aa).

Positions 1–72 (MAKDDVIEID…DKGRITFRYK (72 aa)) constitute an S1-like domain.

The protein belongs to the IF-1 family. As to quaternary structure, component of the 30S ribosomal translation pre-initiation complex which assembles on the 30S ribosome in the order IF-2 and IF-3, IF-1 and N-formylmethionyl-tRNA(fMet); mRNA recruitment can occur at any time during PIC assembly.

The protein resides in the cytoplasm. Its function is as follows. One of the essential components for the initiation of protein synthesis. Stabilizes the binding of IF-2 and IF-3 on the 30S subunit to which N-formylmethionyl-tRNA(fMet) subsequently binds. Helps modulate mRNA selection, yielding the 30S pre-initiation complex (PIC). Upon addition of the 50S ribosomal subunit IF-1, IF-2 and IF-3 are released leaving the mature 70S translation initiation complex. This Campylobacter jejuni subsp. doylei (strain ATCC BAA-1458 / RM4099 / 269.97) protein is Translation initiation factor IF-1.